The sequence spans 364 residues: DNA polymerase IV (364 aa).

A UmuC domain is found at 14-198; it reads IIHIDMDAFF…LPIEKFHGVG (185 aa). 2 residues coordinate Mg(2+): D18 and D116. Residue E117 is part of the active site.

The protein belongs to the DNA polymerase type-Y family. In terms of assembly, monomer. Mg(2+) serves as cofactor.

The protein resides in the cytoplasm. It carries out the reaction DNA(n) + a 2'-deoxyribonucleoside 5'-triphosphate = DNA(n+1) + diphosphate. Functionally, poorly processive, error-prone DNA polymerase involved in untargeted mutagenesis. Copies undamaged DNA at stalled replication forks, which arise in vivo from mismatched or misaligned primer ends. These misaligned primers can be extended by PolIV. Exhibits no 3'-5' exonuclease (proofreading) activity. May be involved in translesional synthesis, in conjunction with the beta clamp from PolIII. The protein is DNA polymerase IV of Streptococcus pyogenes serotype M4 (strain MGAS10750).